The following is a 295-amino-acid chain: 4-hydroxy-tetrahydrodipicolinate synthase (295 aa).

Threonine 47 provides a ligand contact to pyruvate. Tyrosine 135 functions as the Proton donor/acceptor in the catalytic mechanism. The active-site Schiff-base intermediate with substrate is lysine 163. Pyruvate is bound at residue isoleucine 206.

Belongs to the DapA family. Homodimer.

The protein resides in the cytoplasm. It carries out the reaction L-aspartate 4-semialdehyde + pyruvate = (2S,4S)-4-hydroxy-2,3,4,5-tetrahydrodipicolinate + H2O + H(+). It participates in amino-acid biosynthesis; L-lysine biosynthesis via DAP pathway; (S)-tetrahydrodipicolinate from L-aspartate: step 3/4. In terms of biological role, catalyzes the condensation of (S)-aspartate-beta-semialdehyde [(S)-ASA] and pyruvate to 4-hydroxy-tetrahydrodipicolinate (HTPA). In Staphylococcus aureus (strain bovine RF122 / ET3-1), this protein is 4-hydroxy-tetrahydrodipicolinate synthase.